The primary structure comprises 173 residues: Crossover junction endodeoxyribonuclease RuvC (173 aa).

Catalysis depends on residues Asp-8, Glu-67, and Asp-139. Mg(2+) contacts are provided by Asp-8, Glu-67, and Asp-139.

The protein belongs to the RuvC family. In terms of assembly, homodimer which binds Holliday junction (HJ) DNA. The HJ becomes 2-fold symmetrical on binding to RuvC with unstacked arms; it has a different conformation from HJ DNA in complex with RuvA. In the full resolvosome a probable DNA-RuvA(4)-RuvB(12)-RuvC(2) complex forms which resolves the HJ. Requires Mg(2+) as cofactor.

It localises to the cytoplasm. The catalysed reaction is Endonucleolytic cleavage at a junction such as a reciprocal single-stranded crossover between two homologous DNA duplexes (Holliday junction).. In terms of biological role, the RuvA-RuvB-RuvC complex processes Holliday junction (HJ) DNA during genetic recombination and DNA repair. Endonuclease that resolves HJ intermediates. Cleaves cruciform DNA by making single-stranded nicks across the HJ at symmetrical positions within the homologous arms, yielding a 5'-phosphate and a 3'-hydroxyl group; requires a central core of homology in the junction. The consensus cleavage sequence is 5'-(A/T)TT(C/G)-3'. Cleavage occurs on the 3'-side of the TT dinucleotide at the point of strand exchange. HJ branch migration catalyzed by RuvA-RuvB allows RuvC to scan DNA until it finds its consensus sequence, where it cleaves and resolves the cruciform DNA. The chain is Crossover junction endodeoxyribonuclease RuvC from Shewanella sediminis (strain HAW-EB3).